A 457-amino-acid polypeptide reads, in one-letter code: D-hydantoinase (457 aa).

Histidine 57 and histidine 59 together coordinate Zn(2+). The residue at position 69 (serine 69) is a Phosphoserine. Lysine 148 is a binding site for Zn(2+). An N6-carboxylysine modification is found at lysine 148. Tyrosine 153 serves as a coordination point for substrate. Zn(2+) is bound by residues histidine 181 and histidine 237. Threonine 286 contacts substrate. Aspartate 313 contributes to the Zn(2+) binding site. Asparagine 335 serves as a coordination point for substrate.

The protein belongs to the metallo-dependent hydrolases superfamily. Hydantoinase/dihydropyrimidinase family. In terms of assembly, homodimer and homotetramer. It depends on Zn(2+) as a cofactor. Post-translationally, carboxylation allows a single lysine to coordinate two zinc ions.

Catalyzes the stereospecific hydrolysis of the cyclic amide bond of D-hydantoin derivatives. This chain is D-hydantoinase (hyuA), found in Ralstonia pickettii (Burkholderia pickettii).